Consider the following 409-residue polypeptide: ATPase ASNA1 homolog (409 aa).

21 to 28 (KGGVGKTT) provides a ligand contact to ATP. Residue Asp62 is part of the active site. The ATP site is built by Glu303 and Asn330. Zn(2+) is bound by residues Cys342 and Cys345.

Belongs to the arsA ATPase family. Homodimer.

It localises to the cytoplasm. The protein localises to the endoplasmic reticulum. ATPase required for the post-translational delivery of tail-anchored (TA) proteins to the endoplasmic reticulum. Recognizes and selectively binds the transmembrane domain of TA proteins in the cytosol. This complex then targets to the endoplasmic reticulum by membrane-bound receptors, where the tail-anchored protein is released for insertion. This process is regulated by ATP binding and hydrolysis. ATP binding drives the homodimer towards the closed dimer state, facilitating recognition of newly synthesized TA membrane proteins. ATP hydrolysis is required for insertion. Subsequently, the homodimer reverts towards the open dimer state, lowering its affinity for the membrane-bound receptor, and returning it to the cytosol to initiate a new round of targeting. In Leishmania major, this protein is ATPase ASNA1 homolog.